A 1043-amino-acid polypeptide reads, in one-letter code: F-box DNA helicase 1 (1043 aa).

The interval 30 to 56 is disordered; the sequence is QRWTNRDPNHGLYPKPRTKRGSRGQGS. The PIP-box motif lies at 57–64; sequence QRCIPEFF. Positions 101-191 are disordered; it reads CALPQEGSAG…QDAGDVGPDP (91 aa). Position 124 is a phosphoserine (S124). In terms of domain architecture, F-box spans 138–184; that stretch reads SRWDGVSKKAPRHHLSVPCTRPREARQEAEDSTSRLSAESGETDQDA. Over residues 158–170 the composition is skewed to basic and acidic residues; it reads RPREARQEAEDST. The 264-residue stretch at 442 to 705 folds into the UvrD-like helicase ATP-binding domain; it reads THEQQLILNH…FYLTQSFRFG (264 aa). 463–470 contacts ATP; the sequence is AFAGTGKT. Residues 807-811 carry the APIM motif motif; sequence KFIRR.

It belongs to the helicase family. UvrD subfamily. As to quaternary structure, part of the SCF (SKP1-CUL1-F-box) E3 ubiquitin-protein ligase complex SCF(FBH1) composed of CUL1, SKP1, RBX1 and FBH1. Interacts with RAD51. Interacts with RPA2. Interacts (via PIP-box and RanBP2-type zinc finger) with PCNA. In terms of processing, ubiquitinated. Ubiquitination by the DCX(DTL) complex, also named CRL4(CDT2), leading to its degradation: ubiquitination takes place after its localization to DNA damage sites, possibly to facilitate the translesion synthesis (TLS) pathway.

It is found in the nucleus. It localises to the chromosome. The enzyme catalyses Couples ATP hydrolysis with the unwinding of duplex DNA by translocating in the 3'-5' direction.. It carries out the reaction ATP + H2O = ADP + phosphate + H(+). It participates in protein modification; protein ubiquitination. 3'-5' DNA helicase and substrate-recognition component of the SCF(FBH1) E3 ubiquitin ligase complex that plays a key role in response to stalled/damaged replication forks. Involved in genome maintenance by acting as an anti-recombinogenic helicase and preventing extensive strand exchange during homologous recombination: promotes RAD51 filament dissolution from stalled forks, thereby inhibiting homologous recombination and preventing excessive recombination. Also promotes cell death and DNA double-strand breakage in response to replication stress: together with MUS81, promotes the endonucleolytic DNA cleavage following prolonged replication stress via its helicase activity, possibly to eliminate cells with excessive replication stress. Plays a major role in remodeling of stalled DNA forks by catalyzing fork regression, in which the fork reverses and the two nascent DNA strands anneal. In addition to the helicase activity, also acts as the substrate-recognition component of the SCF(FBH1) E3 ubiquitin ligase complex, a complex that mediates ubiquitination of RAD51, leading to regulate RAD51 subcellular location. This Homo sapiens (Human) protein is F-box DNA helicase 1.